Reading from the N-terminus, the 89-residue chain is Small ribosomal subunit protein uS15 (89 aa).

Belongs to the universal ribosomal protein uS15 family. As to quaternary structure, part of the 30S ribosomal subunit. Forms a bridge to the 50S subunit in the 70S ribosome, contacting the 23S rRNA.

In terms of biological role, one of the primary rRNA binding proteins, it binds directly to 16S rRNA where it helps nucleate assembly of the platform of the 30S subunit by binding and bridging several RNA helices of the 16S rRNA. Forms an intersubunit bridge (bridge B4) with the 23S rRNA of the 50S subunit in the ribosome. The chain is Small ribosomal subunit protein uS15 from Maridesulfovibrio salexigens (strain ATCC 14822 / DSM 2638 / NCIMB 8403 / VKM B-1763) (Desulfovibrio salexigens).